A 182-amino-acid polypeptide reads, in one-letter code: MNFSAKTVVVIAIGAALYGIGGLPMFGVPVFANTTLKPAMAVLALFSVLFGPIVGFLVGFIGHWVTDLFAGWGVWLTWVLGSGIVGMVIGLFPMMTKNRLQQGELPMKDFALFVVLALAGNVVGYGSSAFLDTILYAEPFTKVFTQLSIIAAGNTILIAVVGFLILKSVAKRNKQSRNLTEA.

Helical transmembrane passes span 8-28, 41-61, 72-92, 110-130, and 146-166; these read VVVI…MFGV, AVLA…VGFI, WGVW…IGLF, FALF…SSAF, and QLSI…FLIL.

This sequence belongs to the UPF0397 family.

Its subcellular location is the cell membrane. The protein is UPF0397 protein VS_II0189 of Vibrio atlanticus (strain LGP32) (Vibrio splendidus (strain Mel32)).